The sequence spans 76 residues: MSFGFPTFSQNRFTEQYSGLCPIAPGRGAGLQPCRRDCPVARWLVADHPVFGSDCRCRMMVGVNRVRIGRHELTGA.

Physically interacts with histone H3 in infected macrophages.

The protein localises to the secreted. Its subcellular location is the host cytoplasm. It localises to the host nucleus. The catalysed reaction is L-lysyl-[protein] + acetyl-CoA = N(6)-acetyl-L-lysyl-[protein] + CoA + H(+). With respect to regulation, is completely inhibited by anacardic acid, an inhibitor of HAT activity. Its function is as follows. Histone acetyltransferase, which by binding to the host chromatin, may manipulate the expression of host genes involved in anti-inflammatory responses to evade clearance and to survive in the intracellular milieu. Acetylates histone H3 at the 'Lys-9' and 'Lys-14' positions. The chain is Histone acetyltransferase from Mycobacterium tuberculosis (strain CDC 1551 / Oshkosh).